The primary structure comprises 323 residues: Olfactory receptor 4K5 (323 aa).

The Extracellular portion of the chain corresponds to 1-25; sequence MDKSNSSVVSEFVLLGLCSSQKLQL. The N-linked (GlcNAc...) asparagine glycan is linked to Asn5. Residues 26-49 form a helical membrane-spanning segment; that stretch reads FYFCFFSVLYTVIVLGNLLIILTV. Residues 50–57 are Cytoplasmic-facing; sequence TSDTSLHS. Residues 58 to 79 traverse the membrane as a helical segment; the sequence is PMYFLLGNLSFVDICQASFATP. Over 80 to 100 the chain is Extracellular; the sequence is KMIADFLSAHETISFSGCIAQ. Cys97 and Cys189 form a disulfide bridge. Residues 101-120 form a helical membrane-spanning segment; that stretch reads IFFIHLFTGGEMVLLVSMAY. Residues 121-139 lie on the Cytoplasmic side of the membrane; the sequence is DRYVAICKPLYYVVIMSRR. The chain crosses the membrane as a helical span at residues 140–158; the sequence is TCTVLVMISWAVSLVHTLS. The Extracellular portion of the chain corresponds to 159-195; that stretch reads QLSFTVNLPFCGPNVVDSFFCDLPRVTKLACLDSYII. Residues 196–219 traverse the membrane as a helical segment; that stretch reads EILIVVNSGILSLSTFSLLVSSYI. Topologically, residues 220–235 are cytoplasmic; sequence IILVTVWLKSSAAMAK. A helical transmembrane segment spans residues 236–258; it reads AFSTLASHIAVVILFFGPCIFIY. Over 259–269 the chain is Extracellular; that stretch reads VWPFTISPLDK. Residues 270 to 289 form a helical membrane-spanning segment; it reads FLAIFYTVFTPVLNPIIYTL. The Cytoplasmic portion of the chain corresponds to 290–323; that stretch reads RNRDMKAAVRKIVNHYLRPRRISEMSLVVRTSFH.

The protein belongs to the G-protein coupled receptor 1 family.

It is found in the cell membrane. Odorant receptor. This chain is Olfactory receptor 4K5 (OR4K5), found in Homo sapiens (Human).